Here is a 189-residue protein sequence, read N- to C-terminus: MAAMSLLQRASVSALTALSCRRAGPRLGVGSFLTRSFPKTVAPVRHSGDHGKRLFVVKPSLYYDARFLRLMKFYLMLTGIPVIIGITLVNIFIGEAELAEIPEGYIPEHWEYYKHPISRWIARNFYDGPEKNYEKTLAILQIESEKAELRLKEQEVRRLMRARGDGPWYQFPTPEKEFIDHSPKATPDN.

A mitochondrion-targeting transit peptide spans 1–46 (MAAMSLLQRASVSALTALSCRRAGPRLGVGSFLTRSFPKTVAPVRH). The chain crosses the membrane as a helical span at residues 73-93 (FYLMLTGIPVIIGITLVNIFI).

Belongs to the complex I NDUFB5 subunit family. In terms of assembly, complex I is composed of 45 different subunits.

The protein resides in the mitochondrion inner membrane. In terms of biological role, accessory subunit of the mitochondrial membrane respiratory chain NADH dehydrogenase (Complex I), that is believed not to be involved in catalysis. Complex I functions in the transfer of electrons from NADH to the respiratory chain. The immediate electron acceptor for the enzyme is believed to be ubiquinone. This Mus musculus (Mouse) protein is NADH dehydrogenase [ubiquinone] 1 beta subcomplex subunit 5, mitochondrial (Ndufb5).